The chain runs to 460 residues: Flavonol 3-O-glucosyltransferase (460 aa).

The active-site Proton acceptor is His-23. Residues His-23 and Gln-88 each coordinate an anthocyanidin. Catalysis depends on Asp-123, which acts as the Charge relay. Thr-145 lines the UDP-alpha-D-glucose pocket. His-154 is a binding site for an anthocyanidin. 7 residues coordinate UDP-alpha-D-glucose: Ala-339, Gln-341, His-356, Trp-359, Asn-360, Ser-361, and Glu-364. Gly-379 serves as a coordination point for an anthocyanidin. UDP-alpha-D-glucose is bound by residues Asp-380 and Gln-381.

It belongs to the UDP-glycosyltransferase family.

The enzyme catalyses a flavonol + UDP-alpha-D-glucose = a flavonol 3-O-beta-D-glucoside + UDP + H(+). The catalysed reaction is quercetin + UDP-alpha-D-glucose = quercetin 3-O-beta-D-glucoside + UDP + H(+). It participates in flavonoid metabolism. In terms of biological role, flavonol 3-O-glucosyltransferase that catalyzes the transfer of glucose from UDP-glucose to the 3-OH position of quercetin and kaempferol. Possesses high quercetin 3-O-glucosyltransferase activity in vitro. Catalyzes the glycosylation of anthocyanins from UDP-glucose. Also active in vitro on benzoates and benzoate derivatives. The polypeptide is Flavonol 3-O-glucosyltransferase (Arabidopsis thaliana (Mouse-ear cress)).